Here is a 309-residue protein sequence, read N- to C-terminus: HPr kinase/phosphorylase (309 aa).

Active-site residues include histidine 138 and lysine 159. Position 153–160 (153–160 (GDSGIGKS)) interacts with ATP. Mg(2+) is bound at residue serine 160. Aspartate 177 (proton acceptor; for phosphorylation activity. Proton donor; for dephosphorylation activity) is an active-site residue. Residues 201 to 210 (LEIRGVGIID) are important for the catalytic mechanism of both phosphorylation and dephosphorylation. Glutamate 202 contacts Mg(2+). Arginine 243 is a catalytic residue. An important for the catalytic mechanism of dephosphorylation region spans residues 264–269 (PVKTGR).

Belongs to the HPrK/P family. Homohexamer. Mg(2+) serves as cofactor.

It catalyses the reaction [HPr protein]-L-serine + ATP = [HPr protein]-O-phospho-L-serine + ADP + H(+). The catalysed reaction is [HPr protein]-O-phospho-L-serine + phosphate + H(+) = [HPr protein]-L-serine + diphosphate. Functionally, catalyzes the ATP- as well as the pyrophosphate-dependent phosphorylation of a specific serine residue in HPr, a phosphocarrier protein of the phosphoenolpyruvate-dependent sugar phosphotransferase system (PTS). HprK/P also catalyzes the pyrophosphate-producing, inorganic phosphate-dependent dephosphorylation (phosphorolysis) of seryl-phosphorylated HPr (P-Ser-HPr). The two antagonistic activities of HprK/P are regulated by several intracellular metabolites, which change their concentration in response to the absence or presence of rapidly metabolisable carbon sources (glucose, fructose, etc.) in the growth medium. Therefore, by controlling the phosphorylation state of HPr, HPrK/P is a sensor enzyme that plays a major role in the regulation of carbon metabolism and sugar transport: it mediates carbon catabolite repression (CCR), and regulates PTS-catalyzed carbohydrate uptake and inducer exclusion. The protein is HPr kinase/phosphorylase of Streptococcus thermophilus (strain ATCC BAA-250 / LMG 18311).